We begin with the raw amino-acid sequence, 421 residues long: EGFR adapter protein (421 aa).

Disordered regions lie at residues 18 to 94 (TFIS…PQLQ), 109 to 154 (DVQE…RLVD), 173 to 194 (EDSR…SGCG), and 372 to 396 (PVPL…AGGT). Over residues 21-30 (SSSSASSSSS) the composition is skewed to low complexity. Residues 62 to 89 (FFHHHHPPAHPHPPRQQPHPHSHSHPHP) show a composition bias toward basic residues. Residues 109 to 120 (DVQELSGQEHPH) are compositionally biased toward basic and acidic residues. Over residues 181–194 (STCGSSLTSGSGCG) the composition is skewed to low complexity. Residues 286–379 (WFQAGIPREI…LLPVPLTLPR (94 aa)) enclose the SH2 domain.

As to quaternary structure, may interact (via SH2 domain) with Egfr (when phosphorylated). Detected along the wing margin, with high levels of expression in two stripes of cells on either side of the dorsal/ventral boundary and lower levels of expression in a small region at the anteroposterior boundary (at protein level). High levels of expression along two parallel stripes of cells on either side of the wing pouch dorsal/ventral boundary, and slightly lower levels of expression in a region either side of the anteroposterior boundary. Also expressed in discrete regions of the wing imaginal disk outside of the pouch. Expressed in eye imaginal disk photoreceptors with highest levels of expression in R7 photoreceptor cells.

Involved in the negative regulation of the Egfr/Ras signaling pathway. During wing morphogenesis, may function redundantly with PVRAP to inhibit Egfr activity and prevent uncontrolled cell growth. This is EGFR adapter protein from Drosophila melanogaster (Fruit fly).